The primary structure comprises 1066 residues: Vinculin (1066 aa).

Residues 1 to 835 (MPVFHTRTIE…GAVAKVREAF (835 aa)) form an N-terminal globular head region. Phosphoserine is present on Ser97. The interval 168 to 208 (MTKMAKMIDERQQELTHQEHRVMLVNSMNTVKELLPVLISA) is talin-interaction. N6-acetyllysine is present on Lys173. 3 consecutive repeat copies span residues 259 to 369 (ASKD…KVEN), 370 to 479 (AARK…KTNR), and 480 to 589 (AVAN…QMQE). The interval 259 to 589 (ASKDTEAMKR…LKDLKAQMQE (331 aa)) is 3 X 112 AA tandem repeats. A phosphoserine mark is found at Ser260, Ser272, Ser275, Ser290, Ser346, and Ser434. Lys496 is modified (N6-acetyllysine). Tyr537 carries the phosphotyrosine modification. Ser574, Ser579, and Ser600 each carry phosphoserine. Residues Thr604 and Thr672 each carry the phosphothreonine modification. Residue Ser721 is modified to Phosphoserine. Residues 741–764 (MANIQPQMLVAGATSIARRANRIL) form an interaction with ACTN4 region. Phosphoserine occurs at positions 795 and 809. Residue Tyr822 is modified to Phosphotyrosine. A linker (Pro-rich) region spans residues 836–878 (QPQEPDFPPPPPDLEQLRLTDELAPPKPPLPEGEVPPPRPPPP). A disordered region spans residues 857 to 887 (ELAPPKPPLPEGEVPPPRPPPPEEKDEEFPE). Pro residues predominate over residues 860-876 (PPKPPLPEGEVPPPRPP). Positions 879 to 1066 (EEKDEEFPEQ…RWVRKTPWYQ (188 aa)) are C-terminal tail. Facilitates phospholipid membrane insertion stretches follow at residues 935–978 (RLVR…KRIR) and 1052–1066 (AGFT…PWYQ). Position 1065 is a phosphotyrosine; by SRC-type Tyr-kinases (Tyr1065).

Belongs to the vinculin/alpha-catenin family. Exhibits self-association properties. Part of a complex composed of THSD1, PTK2/FAK1, TLN1 and VCL. Interacts with APBB1IP, NRAP and TLN1. Interacts with SYNM. Interacts with CTNNB1 and this interaction is necessary for its localization to the cell-cell junctions and for its function in regulating cell surface expression of E-cadherin. Interacts with SORBS1. Interacts with SYNM. Interacts with CTNNA1. Binds to ACTN4; this interaction triggers conformational changes. Interacts with FLII. In terms of processing, phosphorylated; on serines, threonines and tyrosines. Phosphorylation on Tyr-1065 in activated platelets affects head-tail interactions and cell spreading but has no effect on actin binding nor on localization to focal adhesion plaques. Post-translationally, acetylated; mainly by myristic acid but also by a small amount of palmitic acid.

It localises to the cell membrane. The protein localises to the cell junction. The protein resides in the adherens junction. It is found in the focal adhesion. Its subcellular location is the cytoplasm. It localises to the cytoskeleton. The protein localises to the sarcolemma. The protein resides in the cell projection. It is found in the podosome. Functionally, actin filament (F-actin)-binding protein involved in cell-matrix adhesion and cell-cell adhesion. Regulates cell-surface E-cadherin expression and potentiates mechanosensing by the E-cadherin complex. May also play important roles in cell morphology and locomotion. This is Vinculin (Vcl) from Mus musculus (Mouse).